Here is a 332-residue protein sequence, read N- to C-terminus: Flotillin-like protein FloA (332 aa).

Residues 9–29 traverse the membrane as a helical segment; the sequence is FILIGGGIIFVVLFFHYVPFF.

Belongs to the flotillin-like FloA family. As to quaternary structure, homooligomerizes.

It is found in the cell membrane. Its subcellular location is the membrane raft. Its function is as follows. Found in functional membrane microdomains (FMM) that may be equivalent to eukaryotic membrane rafts. FMMs are highly dynamic and increase in number as cells age. Flotillins are thought to be important factors in membrane fluidity. The protein is Flotillin-like protein FloA of Phocaeicola vulgatus (strain ATCC 8482 / DSM 1447 / JCM 5826 / CCUG 4940 / NBRC 14291 / NCTC 11154) (Bacteroides vulgatus).